The following is a 606-amino-acid chain: Aspartate--tRNA(Asp/Asn) ligase (606 aa).

L-aspartate is bound at residue E177. Positions Q201–K204 are aspartate. R223 contacts L-aspartate. ATP is bound by residues R223–E225 and Q232. H461 is a binding site for L-aspartate. E499 is a binding site for ATP. Position 506 (R506) interacts with L-aspartate. G551 to R554 contacts ATP.

Belongs to the class-II aminoacyl-tRNA synthetase family. Type 1 subfamily. In terms of assembly, homodimer.

Its subcellular location is the cytoplasm. The catalysed reaction is tRNA(Asx) + L-aspartate + ATP = L-aspartyl-tRNA(Asx) + AMP + diphosphate. Functionally, aspartyl-tRNA synthetase with relaxed tRNA specificity since it is able to aspartylate not only its cognate tRNA(Asp) but also tRNA(Asn). Reaction proceeds in two steps: L-aspartate is first activated by ATP to form Asp-AMP and then transferred to the acceptor end of tRNA(Asp/Asn). The protein is Aspartate--tRNA(Asp/Asn) ligase of Prochlorococcus marinus (strain MIT 9313).